The primary structure comprises 209 residues: Bilin biosynthesis protein RpcF (209 aa).

The protein belongs to the CpcE/RpcE/PecE family.

Its function is as follows. An enzyme involved in the biosynthesis of bilin. Might be involved in the specific attachment of phycoerythrobilin (PEB) to the R-phycocyanin II alpha chain. The polypeptide is Bilin biosynthesis protein RpcF (rpcF) (Synechococcus sp. (strain WH8020)).